Reading from the N-terminus, the 134-residue chain is Phospholipase A2 (134 aa).

Residues Trp8, Gly10, and Gly12 each contribute to the Ca(2+) site. Cystine bridges form between Cys9–Cys31, Cys30–Cys70, Cys37–Cys63, Cys61–Cys95, and Cys105–Cys113. Asn13 is a glycosylation site (N-linked (GlcNAc...) asparagine). Residue His34 is part of the active site. Asp35 serves as a coordination point for Ca(2+). Asp64 is a catalytic residue.

It belongs to the phospholipase A2 family. Group III subfamily. It depends on Ca(2+) as a cofactor. As to expression, expressed by the venom gland.

It is found in the secreted. It carries out the reaction a 1,2-diacyl-sn-glycero-3-phosphocholine + H2O = a 1-acyl-sn-glycero-3-phosphocholine + a fatty acid + H(+). PLA2 catalyzes the calcium-dependent hydrolysis of the 2-acyl groups in 3-sn-phosphoglycerides. In Apis cerana cerana (Oriental honeybee), this protein is Phospholipase A2.